The primary structure comprises 163 residues: ATP synthase subunit b 1 (163 aa).

Residues 7 to 27 traverse the membrane as a helical segment; that stretch reads AETWVAVAFVILMALFAYLGV.

It belongs to the ATPase B chain family. As to quaternary structure, F-type ATPases have 2 components, F(1) - the catalytic core - and F(0) - the membrane proton channel. F(1) has five subunits: alpha(3), beta(3), gamma(1), delta(1), epsilon(1). F(0) has three main subunits: a(1), b(2) and c(10-14). The alpha and beta chains form an alternating ring which encloses part of the gamma chain. F(1) is attached to F(0) by a central stalk formed by the gamma and epsilon chains, while a peripheral stalk is formed by the delta and b chains.

The protein resides in the cell inner membrane. F(1)F(0) ATP synthase produces ATP from ADP in the presence of a proton or sodium gradient. F-type ATPases consist of two structural domains, F(1) containing the extramembraneous catalytic core and F(0) containing the membrane proton channel, linked together by a central stalk and a peripheral stalk. During catalysis, ATP synthesis in the catalytic domain of F(1) is coupled via a rotary mechanism of the central stalk subunits to proton translocation. Functionally, component of the F(0) channel, it forms part of the peripheral stalk, linking F(1) to F(0). The chain is ATP synthase subunit b 1 from Rhodopseudomonas palustris (strain BisB5).